Reading from the N-terminus, the 358-residue chain is uncharacterized protein (358 aa).

The signal sequence occupies residues 1–15; sequence MITGKTISLPLSVIA. Cysteine 16 carries the N-palmitoyl cysteine lipid modification. Cysteine 16 carries S-diacylglycerol cysteine lipidation. The tract at residues 331–358 is disordered; the sequence is PCGTGSPGNPPPNINSVAQHRISTNTNR. Residues 347–358 are compositionally biased toward polar residues; sequence VAQHRISTNTNR.

The protein resides in the cell membrane. This is an uncharacterized protein from Sinorhizobium fredii (strain NBRC 101917 / NGR234).